The following is a 131-amino-acid chain: MAEAKGTASIQFFRGVDEPVVPDIRLTRSRDGRTGQATFVFEQPQALAPETFGNIGGMWMVDEEGEMVTREVNGKFVNGIPSALEATYTWKTEEDFERFMRFAQRYADSNGLGYSQNQKSDQTDAATEEQA.

Residues 110–131 (NGLGYSQNQKSDQTDAATEEQA) are disordered. The segment covering 112 to 125 (LGYSQNQKSDQTDA) has biased composition (polar residues).

Belongs to the Psb28 family. In terms of assembly, part of the photosystem II complex.

It localises to the cellular thylakoid membrane. This Synechococcus sp. (strain CC9902) protein is Photosystem II reaction center Psb28 protein.